The chain runs to 410 residues: Histidine--tRNA ligase (410 aa).

The protein belongs to the class-II aminoacyl-tRNA synthetase family.

It is found in the cytoplasm. The catalysed reaction is tRNA(His) + L-histidine + ATP = L-histidyl-tRNA(His) + AMP + diphosphate + H(+). In Methanoculleus marisnigri (strain ATCC 35101 / DSM 1498 / JR1), this protein is Histidine--tRNA ligase.